Reading from the N-terminus, the 567-residue chain is MPSEKATTRHLPGAVETLSPRTGRRPETPAYGSWLLGRVSESPRMRRVRIQGMLTVAILVTNVIGLIVGAMLLTVAFPKPSVILDAPHWVSFGIVPGYCVLAFILGTYWLTRQTARALRWAIEERTPSHDEARSAFLVPLRVALAVLFLWGAAAALWTIIYGLANRLFIPRFLFSMGVIGVVAATSCYLLTEFALRPMAAQALEVGATPRSLVRGIVGRTMLVWLLCSGVPNVGVALTAIFDDTFWELSNDQFMITVLILWAPLLIFGFILMWILAWLTATPVRVVREALNRVEQGDLSGDLVVFDGTELGELQRGFNRMVEGLRERERVRDLFGRHVGREVAAAAERERPKLGGEERHVAVVFVDIVGSTQLVTSRPAAEVVMLLNRFFTVIVDEVNHHRGLVNKFQGDASLAVFGAPNRLSHPEDAALATARAIADRLASEMPECQAGIGVAAGQVVAGNVGAHERFEYTVIGEPVNEAARLCELAKSYPSRLLASSQTLRGASENECARWSLGETVTLRGHDQPIRLASPVQQLQMPAQSADIVGGALGDHQTHTIYRGAHPTD.

Positions 1-26 are disordered; it reads MPSEKATTRHLPGAVETLSPRTGRRP. The next 6 membrane-spanning stretches (helical) occupy residues 57–77, 90–110, 142–162, 173–193, 221–241, and 257–277; these read AILV…TVAF, VSFG…TYWL, VALA…IIYG, LFSM…LTEF, MLVW…TAIF, and VLIL…ILAW. The 53-residue stretch at 277-329 folds into the HAMP domain; sequence WLTATPVRVVREALNRVEQGDLSGDLVVFDGTELGELQRGFNRMVEGLRERER. Positions 361 to 485 constitute a Guanylate cyclase domain; it reads AVVFVDIVGS…EPVNEAARLC (125 aa).

This sequence belongs to the adenylyl cyclase class-3 family.

It is found in the cell membrane. This is an uncharacterized protein from Mycobacterium bovis (strain ATCC BAA-935 / AF2122/97).